The primary structure comprises 957 residues: Glycine dehydrogenase (decarboxylating) (957 aa).

Lysine 708 bears the N6-(pyridoxal phosphate)lysine mark.

Belongs to the GcvP family. In terms of assembly, the glycine cleavage system is composed of four proteins: P, T, L and H. The cofactor is pyridoxal 5'-phosphate.

It catalyses the reaction N(6)-[(R)-lipoyl]-L-lysyl-[glycine-cleavage complex H protein] + glycine + H(+) = N(6)-[(R)-S(8)-aminomethyldihydrolipoyl]-L-lysyl-[glycine-cleavage complex H protein] + CO2. In terms of biological role, the glycine cleavage system catalyzes the degradation of glycine. The P protein binds the alpha-amino group of glycine through its pyridoxal phosphate cofactor; CO(2) is released and the remaining methylamine moiety is then transferred to the lipoamide cofactor of the H protein. This chain is Glycine dehydrogenase (decarboxylating), found in Shigella sonnei (strain Ss046).